A 174-amino-acid chain; its full sequence is WAP four-disulfide core domain protein 2 (174 aa).

The signal sequence occupies residues 1–25 (MPACRLCLLAAGLLLGLLLFTPISA). The region spanning 29 to 74 (DAEKPGECPQLEPITDCVLECTLDKDCADNRKCCQAGCSSVCSKPN) is the WAP 1 domain. Disulfide bonds link Cys-36–Cys-62, Cys-45–Cys-66, Cys-49–Cys-61, and Cys-55–Cys-70. Residues 68–117 (SVCSKPNGPSEGELSGTDTKLSETGTTTQSAGLDHTTKPPGGQVSTKPPA) are disordered. The segment covering 83-98 (GTDTKLSETGTTTQSA) has biased composition (polar residues). Residues 125–173 (VREKQGTCPSVDIPKLGLCEDQCQVDSQCSGNMKCCRNGCGKMACTTPK) form the WAP 2 domain. 4 disulfides stabilise this stretch: Cys-132–Cys-160, Cys-143–Cys-164, Cys-147–Cys-159, and Cys-153–Cys-169.

As to quaternary structure, homotrimer; disulfide-linked.

Its subcellular location is the secreted. Broad range protease inhibitor. This is WAP four-disulfide core domain protein 2 (Wfdc2) from Mus musculus (Mouse).